A 942-amino-acid polypeptide reads, in one-letter code: DNA polymerase I (942 aa).

Residues 177–269 (EPDQLADLRG…LEAARIGVYD (93 aa)) form the 5'-3' exonuclease domain. Residues 340–522 (TIVRDATALA…LTERLQRQLE (183 aa)) enclose the 3'-5' exonuclease domain.

This sequence belongs to the DNA polymerase type-A family. As to quaternary structure, single-chain monomer with multiple functions.

The enzyme catalyses DNA(n) + a 2'-deoxyribonucleoside 5'-triphosphate = DNA(n+1) + diphosphate. Functionally, in addition to polymerase activity, this DNA polymerase exhibits 3'-5' and 5'-3' exonuclease activity. This is DNA polymerase I (polA) from Chloroflexus aurantiacus (strain ATCC 29366 / DSM 635 / J-10-fl).